The primary structure comprises 195 residues: Transcription factor LBX2 (195 aa).

2 disordered regions span residues 1–89 (MNSV…KSRT) and 164–195 (PALPDSTSSPDPGPSGPDSEPNLSDEEIQVDD). The homeobox DNA-binding region spans 84–143 (RRKSRTAFTAQQVLELERRFVFQKYLAPSERDGLAARLGLANAQVVTWFQNRRAKLKRDV). Acidic residues predominate over residues 186-195 (LSDEEIQVDD).

Expressed in the developing urogenital system, eye and brain.

The protein resides in the nucleus. In terms of biological role, transcription factor. The polypeptide is Transcription factor LBX2 (Lbx2) (Mus musculus (Mouse)).